Consider the following 517-residue polypeptide: GMP synthase [glutamine-hydrolyzing] (517 aa).

The Glutamine amidotransferase type-1 domain maps to 11–202 (KIIVLDFGSQ…AFDVCEAKAN (192 aa)). Cysteine 88 functions as the Nucleophile in the catalytic mechanism. Catalysis depends on residues histidine 176 and glutamate 178. The GMPS ATP-PPase domain maps to 203-392 (WSMNDFIDMQ…LGMPEDLVWR (190 aa)). An ATP-binding site is contributed by 230-236 (SGGVDSS).

Homodimer.

The catalysed reaction is XMP + L-glutamine + ATP + H2O = GMP + L-glutamate + AMP + diphosphate + 2 H(+). The protein operates within purine metabolism; GMP biosynthesis; GMP from XMP (L-Gln route): step 1/1. Its function is as follows. Catalyzes the synthesis of GMP from XMP. In Pediococcus pentosaceus (strain ATCC 25745 / CCUG 21536 / LMG 10740 / 183-1w), this protein is GMP synthase [glutamine-hydrolyzing].